We begin with the raw amino-acid sequence, 100 residues long: Large ribosomal subunit protein uL23 (100 aa).

This sequence belongs to the universal ribosomal protein uL23 family. As to quaternary structure, part of the 50S ribosomal subunit. Contacts protein L29, and trigger factor when it is bound to the ribosome.

One of the early assembly proteins it binds 23S rRNA. One of the proteins that surrounds the polypeptide exit tunnel on the outside of the ribosome. Forms the main docking site for trigger factor binding to the ribosome. The protein is Large ribosomal subunit protein uL23 of Mycolicibacterium gilvum (strain PYR-GCK) (Mycobacterium gilvum (strain PYR-GCK)).